We begin with the raw amino-acid sequence, 506 residues long: MIFQKRTFFIKRGCVLNIRVRYAPSPTGLQHIGGIRTALFNYFFAKSFNGKFLLRIEDTDQTRYYKEAEEDLYQSLAWLGIDFDEGPTCGGSYSPYIQSQRTEIYRKYAKELIESGNAYYCYCSPDRLERIRKIQTINKMVPGYDRHCRHLNKDEIKDALSLGISPVIRFKIPFDGETSFNDILLGKITWANKDISPDPVILKSDGFPTYHLANVVDDHLMEISHVLRAQEWISSGSLHVLLYNAFGWNPPIYCHLPMVMGSDGQKLSKRHGATALKQFIDDGYLPEAIINYVTLLGWSYDGKSEFFTKNELQKLFSIDKISKSPAVFDYNKLDFFNSHYIRTKEDHELAELLLPFLQKAGYIKKDSNSCDKEKLLLLVPLIKPRIRKLGDAVGMLRFFYTNISTWNVNEFLGKKKTVRDIYLLLEKIKPVLEGFETRILSENEQIFYNFAKENNLKIGEVLIPIRIAVLGSKVSPPLFDSLQLLGKVKVFDRINKAQDFLKKYEL.

The 'HIGH' region motif lies at 24–34 (PSPTGLQHIGG). Residues Cys121, Cys123, Cys148, and His150 each contribute to the Zn(2+) site. The 'KMSKS' region motif lies at 266–270 (KLSKR). ATP is bound at residue Lys269.

This sequence belongs to the class-I aminoacyl-tRNA synthetase family. Glutamate--tRNA ligase type 1 subfamily. Monomer. Zn(2+) serves as cofactor.

Its subcellular location is the cytoplasm. It carries out the reaction tRNA(Glu) + L-glutamate + ATP = L-glutamyl-tRNA(Glu) + AMP + diphosphate. Functionally, catalyzes the attachment of glutamate to tRNA(Glu) in a two-step reaction: glutamate is first activated by ATP to form Glu-AMP and then transferred to the acceptor end of tRNA(Glu). This is Glutamate--tRNA ligase from Borrelia recurrentis (strain A1).